Consider the following 213-residue polypeptide: Leucyl/phenylalanyl-tRNA--protein transferase (213 aa).

This sequence belongs to the L/F-transferase family.

It is found in the cytoplasm. It catalyses the reaction N-terminal L-lysyl-[protein] + L-leucyl-tRNA(Leu) = N-terminal L-leucyl-L-lysyl-[protein] + tRNA(Leu) + H(+). The enzyme catalyses N-terminal L-arginyl-[protein] + L-leucyl-tRNA(Leu) = N-terminal L-leucyl-L-arginyl-[protein] + tRNA(Leu) + H(+). The catalysed reaction is L-phenylalanyl-tRNA(Phe) + an N-terminal L-alpha-aminoacyl-[protein] = an N-terminal L-phenylalanyl-L-alpha-aminoacyl-[protein] + tRNA(Phe). Functionally, functions in the N-end rule pathway of protein degradation where it conjugates Leu, Phe and, less efficiently, Met from aminoacyl-tRNAs to the N-termini of proteins containing an N-terminal arginine or lysine. In Campylobacter lari (strain RM2100 / D67 / ATCC BAA-1060), this protein is Leucyl/phenylalanyl-tRNA--protein transferase.